We begin with the raw amino-acid sequence, 510 residues long: ATP synthase subunit alpha (510 aa).

169–176 (GDRQTGKS) contributes to the ATP binding site.

This sequence belongs to the ATPase alpha/beta chains family. As to quaternary structure, F-type ATPases have 2 components, CF(1) - the catalytic core - and CF(0) - the membrane proton channel. CF(1) has five subunits: alpha(3), beta(3), gamma(1), delta(1), epsilon(1). CF(0) has three main subunits: a(1), b(2) and c(9-12). The alpha and beta chains form an alternating ring which encloses part of the gamma chain. CF(1) is attached to CF(0) by a central stalk formed by the gamma and epsilon chains, while a peripheral stalk is formed by the delta and b chains.

It localises to the cell membrane. The catalysed reaction is ATP + H2O + 4 H(+)(in) = ADP + phosphate + 5 H(+)(out). In terms of biological role, produces ATP from ADP in the presence of a proton gradient across the membrane. The alpha chain is a regulatory subunit. This chain is ATP synthase subunit alpha, found in Wigglesworthia glossinidia brevipalpis.